Consider the following 487-residue polypeptide: Glycogen synthase (487 aa).

Position 19 (lysine 19) interacts with ADP-alpha-D-glucose.

Belongs to the glycosyltransferase 1 family. Bacterial/plant glycogen synthase subfamily.

The catalysed reaction is [(1-&gt;4)-alpha-D-glucosyl](n) + ADP-alpha-D-glucose = [(1-&gt;4)-alpha-D-glucosyl](n+1) + ADP + H(+). It functions in the pathway glycan biosynthesis; glycogen biosynthesis. Functionally, synthesizes alpha-1,4-glucan chains using ADP-glucose. The protein is Glycogen synthase of Moorella thermoacetica (strain ATCC 39073 / JCM 9320).